A 352-amino-acid chain; its full sequence is Heat-inducible transcription repressor HrcA (352 aa).

The protein belongs to the HrcA family.

Functionally, negative regulator of class I heat shock genes (grpE-dnaK-dnaJ and groELS operons). Prevents heat-shock induction of these operons. The chain is Heat-inducible transcription repressor HrcA from Lactobacillus gasseri (strain ATCC 33323 / DSM 20243 / BCRC 14619 / CIP 102991 / JCM 1131 / KCTC 3163 / NCIMB 11718 / NCTC 13722 / AM63).